Here is a 136-residue protein sequence, read N- to C-terminus: Small ribosomal subunit protein uS11c (136 aa).

The protein belongs to the universal ribosomal protein uS11 family. As to quaternary structure, part of the 30S ribosomal subunit.

It is found in the plastid. Its subcellular location is the chloroplast. The protein is Small ribosomal subunit protein uS11c of Guizotia abyssinica (Niger).